The chain runs to 299 residues: Probable lipid kinase YegS (299 aa).

In terms of domain architecture, DAGKc spans 2-133 (ANFPASLLIL…IDMARVNDKT (132 aa)). Residues threonine 40, 66 to 72 (GDGTINE), and threonine 95 each bind ATP. Residues leucine 215, aspartate 218, and leucine 220 each coordinate Mg(2+). Glutamate 271 (proton acceptor) is an active-site residue.

This sequence belongs to the diacylglycerol/lipid kinase family. YegS lipid kinase subfamily. Mg(2+) serves as cofactor. Requires Ca(2+) as cofactor.

Its subcellular location is the cytoplasm. Functionally, probably phosphorylates lipids; the in vivo substrate is unknown. In Salmonella heidelberg (strain SL476), this protein is Probable lipid kinase YegS.